Consider the following 105-residue polypeptide: Sulfite reductase, dissimilatory-type subunit gamma (105 aa).

It belongs to the DsrC/TusE family. In terms of assembly, heterohexamer of two alpha, two beta and two gamma subunits.

Its subcellular location is the cytoplasm. It carries out the reaction [DsrC protein]-trisulfide + NAD(+) + 3 H2O = [DsrC protein]-dithiol + sulfite + NADH + 3 H(+). In terms of biological role, catalyzes the reduction of sulfite to sulfide. This is the terminal oxidation reaction in sulfate respiration, a process catalyzed by the sulfate-reducing bacteria. In Nitratidesulfovibrio vulgaris (strain ATCC 29579 / DSM 644 / CCUG 34227 / NCIMB 8303 / VKM B-1760 / Hildenborough) (Desulfovibrio vulgaris), this protein is Sulfite reductase, dissimilatory-type subunit gamma (dsvC).